Reading from the N-terminus, the 77-residue chain is MVKLRLKRYGRKGQVTYRIVAMNNLSRRDGKAIEELGFYNPRTNESSLNIANIKRRIEQGAQPTNTVRYILAKANIL.

This sequence belongs to the bacterial ribosomal protein bS16 family.

The protein localises to the plastid. The protein resides in the cyanelle. In Cyanophora paradoxa, this protein is Small ribosomal subunit protein bS16c.